Reading from the N-terminus, the 165-residue chain is Coronafacic acid dehydratase (165 aa).

The active site involves His-62.

The protein belongs to the thioester dehydratase family.

It participates in phytotoxin biosynthesis; coronatine biosynthesis. The protein is Coronafacic acid dehydratase (cfa2) of Pseudomonas savastanoi pv. glycinea (Pseudomonas syringae pv. glycinea).